Reading from the N-terminus, the 568-residue chain is Potassium-transporting ATPase potassium-binding subunit (568 aa).

12 consecutive transmembrane segments (helical) span residues Ile-7–Leu-27, His-65–Leu-85, Gly-136–Ile-156, Leu-179–Pro-199, Leu-254–Phe-274, Trp-285–Ala-305, Phe-332–Val-352, Ala-354–Gly-374, Ile-377–Phe-397, Met-423–Val-443, Ile-487–Ile-507, and Leu-530–Ala-550.

It belongs to the KdpA family. As to quaternary structure, the system is composed of three essential subunits: KdpA, KdpB and KdpC.

The protein localises to the cell inner membrane. Part of the high-affinity ATP-driven potassium transport (or Kdp) system, which catalyzes the hydrolysis of ATP coupled with the electrogenic transport of potassium into the cytoplasm. This subunit binds the periplasmic potassium ions and delivers the ions to the membrane domain of KdpB through an intramembrane tunnel. This chain is Potassium-transporting ATPase potassium-binding subunit, found in Granulibacter bethesdensis (strain ATCC BAA-1260 / CGDNIH1).